Consider the following 415-residue polypeptide: Glycerate 2-kinase (415 aa).

K57 provides a ligand contact to substrate.

The protein belongs to the glycerate kinase type-1 family. Homodimer. It depends on Mg(2+) as a cofactor. Ni(2+) serves as cofactor. The cofactor is Mn(2+). Requires Co(2+) as cofactor.

It carries out the reaction (R)-glycerate + ATP = (2R)-2-phosphoglycerate + ADP + H(+). Its function is as follows. Catalyzes the ATP-dependent phosphorylation of D-glycerate to 2-phosphoglycerate. It can also partially utilize GTP, CTP or UTP as phosphate donor. The protein is Glycerate 2-kinase (gck) of Picrophilus torridus (strain ATCC 700027 / DSM 9790 / JCM 10055 / NBRC 100828 / KAW 2/3).